The following is a 98-amino-acid chain: Large ribosomal subunit protein uL23 (98 aa).

It belongs to the universal ribosomal protein uL23 family. As to quaternary structure, part of the 50S ribosomal subunit. Contacts protein L29, and trigger factor when it is bound to the ribosome.

Its function is as follows. One of the early assembly proteins it binds 23S rRNA. One of the proteins that surrounds the polypeptide exit tunnel on the outside of the ribosome. Forms the main docking site for trigger factor binding to the ribosome. The polypeptide is Large ribosomal subunit protein uL23 (Ruegeria pomeroyi (strain ATCC 700808 / DSM 15171 / DSS-3) (Silicibacter pomeroyi)).